The following is a 446-amino-acid chain: Nuclear distribution protein PAC1-1 (446 aa).

Residues 9 to 41 form the LisH domain; it reads QAEELHKSLIAYLSSINASQSVTTLREELQIGD. Residues 60–86 are a coiled coil; sequence ISVVRLQKRILDLESKIASLQAELDSA. WD repeat units lie at residues 112 to 153, 155 to 195, 199 to 239, 242 to 281, 284 to 344, 346 to 385, 390 to 430, and 432 to 446; these read SHRG…RTLK, HTRT…ANIR, GHDH…CVKT, TQGD…ARAS, GHEN…IKTL, GHNN…KLVK, AHEH…TGFR, and VIAT…RVFM.

Belongs to the WD repeat LIS1/nudF family. In terms of assembly, self-associates. Interacts with NDL1 and dynein.

It localises to the cytoplasm. It is found in the cytoskeleton. Its subcellular location is the spindle pole. In terms of biological role, positively regulates the activity of the minus-end directed microtubule motor protein dynein. May enhance dynein-mediated microtubule sliding by targeting dynein to the microtubule plus end. Required for nuclear migration during vegetative growth as well as development. Required for retrograde early endosome (EE) transport from the hyphal tip. Required for localization of dynein to the mitotic spindle poles. Recruits additional proteins to the dynein complex at SPBs. The sequence is that of Nuclear distribution protein PAC1-1 from Uncinocarpus reesii (strain UAMH 1704).